The sequence spans 838 residues: Sec1 family domain-containing protein MIP3 (838 aa).

The disordered stretch occupies residues 637 to 677; that stretch reads KSEETKEIPSDDQLDIDALDDDPWGKWGDEEEEEVDNSKAD. The span at 646–658 shows a compositional bias: acidic residues; that stretch reads SDDQLDIDALDDD.

Belongs to the STXBP/unc-18/SEC1 family. In terms of assembly, forms a complex with MAG2, ZW10/MIP1 and MIP2 on the endoplasmic reticulum.

It is found in the endoplasmic reticulum membrane. Required for proper maturation of seed storage proteins. Forms a complex with MAG2, ZW10/MIP1 and MIP2 on the endoplasmic reticulum that may be responsible for efficient transport of seed storage proteins. This chain is Sec1 family domain-containing protein MIP3, found in Arabidopsis thaliana (Mouse-ear cress).